A 117-amino-acid polypeptide reads, in one-letter code: Mini-circle uncharacterized 12.9 kDa protein (117 aa).

This Streptomyces coelicolor (strain ATCC BAA-471 / A3(2) / M145) protein is Mini-circle uncharacterized 12.9 kDa protein.